The sequence spans 559 residues: Chromatin assembly factor 1 subunit B (559 aa).

7 WD repeats span residues 11-54, 64-103, 127-166, 169-208, 228-279, 299-340, and 344-385; these read HNKE…DGKA, RHTKAVNVVRFSPTGEILASGGDDAVILLWKVNDNKEPEQ, GHLEDVYDICWATDGNLMASASVDNTAIIWDVSKGQKISI, EHKSYVQGVTWDPLGQYVATLSCDRVLRVYSIQKKRVAFN, FHDD…RPIA, ELRP…PFGY, and IHYH…IPLK. Residues 386 to 559 form a disordered region; it reads EKPVLNMRTP…NKGGTESLDP (174 aa). A Phosphothreonine modification is found at T394. At S409 the chain carries Phosphoserine. Position 419 is a phosphothreonine (T419). Phosphoserine is present on S429. Positions 430–444 are enriched in low complexity; the sequence is PGTTPPQARQAPAPT. T433 bears the Phosphothreonine mark. Residue S458 is modified to Phosphoserine. Polar residues predominate over residues 469–495; that stretch reads LQPSSQNTKAHPSRRVTLNTLQAWSKT. An N6-acetyllysine modification is found at K494. Phosphothreonine is present on residues T495, T509, T521, and T531. Positions 509 to 526 are enriched in low complexity; sequence TPPSSVPTSVISTPSTEE. Position 538 is a phosphoserine (S538). Residues 541-552 show a composition bias toward basic and acidic residues; it reads ELKRPRLDENKG.

Belongs to the WD repeat HIR1 family. As to quaternary structure, subunit of the CAF-1 complex that contains RBBP4, CHAF1B and CHAF1A. CHAF1A binds directly to CHAF1B. Only minor amounts of RBBP4 are complexed with CHAF1A and CHAF1B in G1 phase. In G2 and S phase also monomeric CHAF1B is detected. Interacts with histones H3.1, H3.2 and H3.1t. Post-translationally, differentially phosphorylated during cell cycle. During mitosis the p60 subunit of inactive CAF-1 is hyperphosphorylated and displaced into the cytosol. Progressivly dephosphorylated from G1 to S and G2 phase. Phosphorylated p60 is recruited to chromatin undergoing DNA repair after UV irradiation in G1, S or G2 phases.

Its subcellular location is the nucleus. It is found in the cytoplasm. Acts as a component of the histone chaperone complex chromatin assembly factor 1 (CAF-1), which assembles histone octamers onto DNA during replication and repair. CAF-1 performs the first step of the nucleosome assembly process, bringing newly synthesized histones H3 and H4 to replicating DNA; histones H2A/H2B can bind to this chromatin precursor subsequent to DNA replication to complete the histone octamer. The chain is Chromatin assembly factor 1 subunit B from Homo sapiens (Human).